We begin with the raw amino-acid sequence, 282 residues long: 4-diphosphocytidyl-2-C-methyl-D-erythritol kinase (282 aa).

Lys9 is an active-site residue. 98 to 108 (PMGGGLGGGSS) serves as a coordination point for ATP. Asp140 is a catalytic residue.

This sequence belongs to the GHMP kinase family. IspE subfamily. As to quaternary structure, homodimer.

The enzyme catalyses 4-CDP-2-C-methyl-D-erythritol + ATP = 4-CDP-2-C-methyl-D-erythritol 2-phosphate + ADP + H(+). It participates in isoprenoid biosynthesis; isopentenyl diphosphate biosynthesis via DXP pathway; isopentenyl diphosphate from 1-deoxy-D-xylulose 5-phosphate: step 3/6. Catalyzes the phosphorylation of the position 2 hydroxy group of 4-diphosphocytidyl-2C-methyl-D-erythritol. The protein is 4-diphosphocytidyl-2-C-methyl-D-erythritol kinase of Klebsiella pneumoniae (strain 342).